The primary structure comprises 184 residues: MKNVTDSFVSLVHWPSAGSFGFNTDILATNPINLSVVLGVLIFFGKGVLSDLLDNRKQRILNTIRNSEELREGAIEQLEKARARLQDVQIEAEGYRAYGYFGIDEQRHESINSTYKTLEQLENNKNESIHFEQQRAINQVRQQIFQQALQGALGTLNSCLNNELHLRTISANIGLFGSMKELTD.

Residues 27–49 (LATNPINLSVVLGVLIFFGKGVL) traverse the membrane as a helical segment.

This sequence belongs to the ATPase B chain family. F-type ATPases have 2 components, F(1) - the catalytic core - and F(0) - the membrane proton channel. F(1) has five subunits: alpha(3), beta(3), gamma(1), delta(1), epsilon(1). F(0) has four main subunits: a(1), b(1), b'(1) and c(10-14). The alpha and beta chains form an alternating ring which encloses part of the gamma chain. F(1) is attached to F(0) by a central stalk formed by the gamma and epsilon chains, while a peripheral stalk is formed by the delta, b and b' chains.

The protein localises to the plastid. The protein resides in the chloroplast thylakoid membrane. In terms of biological role, f(1)F(0) ATP synthase produces ATP from ADP in the presence of a proton or sodium gradient. F-type ATPases consist of two structural domains, F(1) containing the extramembraneous catalytic core and F(0) containing the membrane proton channel, linked together by a central stalk and a peripheral stalk. During catalysis, ATP synthesis in the catalytic domain of F(1) is coupled via a rotary mechanism of the central stalk subunits to proton translocation. Its function is as follows. Component of the F(0) channel, it forms part of the peripheral stalk, linking F(1) to F(0). The sequence is that of ATP synthase subunit b, chloroplastic from Oenothera elata subsp. hookeri (Hooker's evening primrose).